An 805-amino-acid polypeptide reads, in one-letter code: Transcription factor E2f1 (805 aa).

Disordered regions lie at residues 9–45, 119–208, and 224–255; these read APINNSNSSSSHTTTSSNTQRHQQHQQHYGGSGTTGH, AAAA…LRHD, and PASHHPFSLSTPQQQLAASVASSSSSGDRNRA. Low complexity-rich tracts occupy residues 12–37 and 119–134; these read NNSNSSSSHTTTSSNTQRHQQHQQHY and AAAAATAGHTQQQLQQ. 2 stretches are compositionally biased toward polar residues: residues 144 to 154 and 181 to 195; these read RKATGKSNDIT and HHQTVYQKHTASSAP. The PIP-box K+4 motif signature appears at 147-161; sequence TGKSNDITNYYKVKR. The segment covering 240–249 has biased composition (low complexity); the sequence is AASVASSSSS. A DNA-binding region spans residues 253–318; that stretch reads NRADTSLGIL…KKSKNNIQWR (66 aa). Residues 318–411 form a dimerization region; the sequence is RCGQSMVSQE…LPNTKLPREI (94 aa). The residue at position 434 (Ser434) is a Phosphoserine. Disordered stretches follow at residues 578–650 and 714–743; these read SLTE…QRRS and GAGANADPHQPYSHDRNSLPPGVADCDANS. 2 stretches are compositionally biased toward low complexity: residues 595–615 and 623–636; these read AAAAIAAGSSTTATTTLNSHN and SNHSNHSSSNNSKS. A compositionally biased stretch (polar residues) spans 637 to 647; sequence QPPTIGYGSSQ.

It belongs to the E2F/DP family. Heterodimer of E2f and Dp. Cooperates to give sequence-specific DNA binding and optimal trans-activation. Interacts with PCNA. Post-translationally, ubiquitinated by the DCX(DTL) complex, also named CRL4(CDT2) complex, leading to its degradation during S phase. Ubiquitination by the DCX(DTL) complex is essential for cell cycle control and is PCNA-dependent: interacts with PCNA via its PIP-box, while the presence of the containing the 'K+4' motif in the PIP box, recruit the DCX(DTL) complex, leading to its degradation. Segmentally repeated expression throughout early embryos is restricted to the ventral nerve cord in later embryos.

The protein localises to the nucleus. In terms of biological role, transcriptional activator that binds to E2f sites. Required for wild-type growth in mitotic and polytene tissues, Contributes to the expression of replication genes at the G1-S transition and Cyclin E. Activates cell proliferation in wing imaginal disk, which requires expression of vg. In Drosophila melanogaster (Fruit fly), this protein is Transcription factor E2f1.